A 209-amino-acid polypeptide reads, in one-letter code: Transcription antitermination protein NusB (209 aa).

It belongs to the NusB family.

In terms of biological role, involved in transcription antitermination. Required for transcription of ribosomal RNA (rRNA) genes. Binds specifically to the boxA antiterminator sequence of the ribosomal RNA (rrn) operons. This Cyanothece sp. (strain PCC 7425 / ATCC 29141) protein is Transcription antitermination protein NusB.